The sequence spans 1321 residues: Adhesion G protein-coupled receptor A3 (1321 aa).

The signal sequence occupies residues 1–33 (MEPPGRRRGRAQPPLLLPLSLLALLALLGGGGG). The Extracellular segment spans residues 34–761 (GGAAALPAGC…YTQAASLLHP (728 aa)). N-linked (GlcNAc...) asparagine glycosylation is found at Asn81 and Asn98. 4 LRR repeats span residues 82-103 (RTVT…SFSG), 106-127 (LLER…AFWG), 130-151 (SLKR…IFRG), and 154-175 (NLVR…TFDY). N-linked (GlcNAc...) asparagine glycans are attached at residues Asn159, Asn206, Asn301, Asn332, Asn433, Asn453, and Asn592. Positions 187 to 237 (EYLLCDCNILWMHRWVKEKNITVRDTRCVYPKSLQAQPVTGVKQELLTCDP) constitute an LRRCT domain. An Ig-like domain is found at 242 to 340 (PSFYMTPSHR…GNNTRTVDIV (99 aa)). An intrachain disulfide couples Cys264 to Cys324. In terms of domain architecture, GAIN-B spans 583 to 750 (LDKQLSFKCN…AVLMDLTGSE (168 aa)). The stretch at 594-620 (SNTFSSLALKNTIVEASIQLPPSLFSP) is one LRR 5 repeat. N-linked (GlcNAc...) asparagine glycans are attached at residues Asn652, Asn687, and Asn728. Positions 701 to 750 (AARWDFDLLNGQGGWKSDGCHILYSDENITTIQCYSLSNYAVLMDLTGSE) are GPS. The cysteines at positions 720 and 734 are disulfide-linked. A helical transmembrane segment spans residues 762–782 (VVYTTAIILLLCLLAVIVSYI). Residues 783 to 796 (YHHSLIRISLKSWH) are Cytoplasmic-facing. The helical transmembrane segment at 797–817 (MLVNLCFHIFLTCVVFVGGIT) threads the bilayer. Over 818 to 826 (QTRNASICQ) the chain is Extracellular. Asn821 carries an N-linked (GlcNAc...) asparagine glycan. Residues 827–847 (AVGIILHYSTLATVLWVGVTA) form a helical membrane-spanning segment. Residues 848–876 (RNIYKQVTKKAKRCQDPDEPPPPPRPMLR) are Cytoplasmic-facing. The chain crosses the membrane as a helical span at residues 877–897 (FYLIGGGIPIIVCGITAAANI). At 898 to 919 (KNYGSRPNAPYCWMAWEPSLGA) the chain is on the extracellular side. A helical membrane pass occupies residues 920 to 940 (FYGPASFITFVNCMYFLSIFI). Residues 941–996 (QLKRHPERKYELKEPTEEQQRLAANENGEINHQDSMSLSLISTSALENEHTFHSQL) lie on the Cytoplasmic side of the membrane. The helical transmembrane segment at 997–1017 (LGASLTLLLYVALWMFGALAV) threads the bilayer. At 1018–1024 (SLYYPLD) the chain is on the extracellular side. A helical membrane pass occupies residues 1025-1045 (LVFSFVFGATSLSFSAFFVVH). Topologically, residues 1046 to 1321 (HCVNREDVRL…TGLWKHETTV (276 aa)) are cytoplasmic. Polar residues predominate over residues 1073 to 1083 (NVQPPNSNGTN). Disordered regions lie at residues 1073–1094 (NVQP…NSSA), 1198–1219 (VEGS…GHSR), 1231–1265 (QYNP…KKDA), and 1294–1321 (SNGQ…ETTV). Polar residues predominate over residues 1233-1250 (NPPQQDSSDACSTLPKSS). Positions 1319–1321 (TTV) match the PDZ-binding motif.

This sequence belongs to the G-protein coupled receptor 2 family. Adhesion G-protein coupled receptor (ADGR) subfamily. Interacts (via PDZ-binding motif) with DLG1.

Its subcellular location is the membrane. In terms of biological role, orphan receptor that may have a role in planar cell polarity pathway. The polypeptide is Adhesion G protein-coupled receptor A3 (Homo sapiens (Human)).